The following is a 511-amino-acid chain: Zinc finger CCCH-type with G patch domain-containing protein (511 aa).

The C3H1-type zinc-finger motif lies at 157-180 (PCSYYLEGECRFDEARCRYSHGAL). The interval 254 to 281 (DQEDELTSEDSSSVNDGSSDEEESDMDD) is disordered. Residues 271–281 (SSDEEESDMDD) show a composition bias toward acidic residues. In terms of domain architecture, G-patch spans 311-357 (TRGIGSKLMEKMGYIHGTGLGSDGRGIVTPVSAQILPKGRSLDACME). Disordered regions lie at residues 409-433 (GSDNKQQAEPEAKKAKANDLQQHST) and 478-511 (MHNQKQELATLQAQERSLSKEQQTRKSKNKMFEF). A compositionally biased stretch (basic and acidic residues) spans 414–425 (QQAEPEAKKAKA). The segment covering 478–493 (MHNQKQELATLQAQER) has biased composition (polar residues). Residues 494 to 511 (SLSKEQQTRKSKNKMFEF) are compositionally biased toward basic and acidic residues.

Its subcellular location is the nucleus. In terms of biological role, transcription repressor. The polypeptide is Zinc finger CCCH-type with G patch domain-containing protein (Drosophila ananassae (Fruit fly)).